Here is a 95-residue protein sequence, read N- to C-terminus: Small ribosomal subunit protein bS6 (95 aa).

Belongs to the bacterial ribosomal protein bS6 family.

Functionally, binds together with bS18 to 16S ribosomal RNA. In Clostridium acetobutylicum (strain ATCC 824 / DSM 792 / JCM 1419 / IAM 19013 / LMG 5710 / NBRC 13948 / NRRL B-527 / VKM B-1787 / 2291 / W), this protein is Small ribosomal subunit protein bS6.